The primary structure comprises 152 residues: Keratin, high-sulfur matrix protein, B2C (152 aa).

Ala2 carries the post-translational modification N-acetylalanine. Repeats lie at residues 27–36 (STCSQTSCCQ), 37–46 (PTSIQTSCCQ), and 47–56 (PTCLQTSGCE).

The keratin products of mammalian epidermal derivatives such as wool and hair consist of microfibrils embedded in a rigid matrix of other proteins. The matrix proteins include the high-sulfur and high-tyrosine keratins, having molecular weights of 6-20 kDa, whereas the microfibrils contain the larger, low-sulfur keratins (40-56 kDa). This Ovis aries (Sheep) protein is Keratin, high-sulfur matrix protein, B2C.